The primary structure comprises 576 residues: Proline--tRNA ligase (576 aa).

It belongs to the class-II aminoacyl-tRNA synthetase family. ProS type 1 subfamily. Homodimer.

The protein resides in the cytoplasm. The catalysed reaction is tRNA(Pro) + L-proline + ATP = L-prolyl-tRNA(Pro) + AMP + diphosphate. Catalyzes the attachment of proline to tRNA(Pro) in a two-step reaction: proline is first activated by ATP to form Pro-AMP and then transferred to the acceptor end of tRNA(Pro). As ProRS can inadvertently accommodate and process non-cognate amino acids such as alanine and cysteine, to avoid such errors it has two additional distinct editing activities against alanine. One activity is designated as 'pretransfer' editing and involves the tRNA(Pro)-independent hydrolysis of activated Ala-AMP. The other activity is designated 'posttransfer' editing and involves deacylation of mischarged Ala-tRNA(Pro). The misacylated Cys-tRNA(Pro) is not edited by ProRS. In Bordetella parapertussis (strain 12822 / ATCC BAA-587 / NCTC 13253), this protein is Proline--tRNA ligase.